Reading from the N-terminus, the 149-residue chain is Stathmin (149 aa).

Alanine 2 is subject to N-acetylalanine. Serine 4 carries the post-translational modification Phosphoserine. Residues 4 to 145 (SDIQVKELEK…NKESKDPADE (142 aa)) enclose the SLD domain. An N6-acetyllysine modification is found at lysine 9. Serine 16 is modified (phosphoserine; by PKA). Serine 25 is modified (phosphoserine; by CDK1, MAPK1 and MAPK3). Residues 27–46 (RSKESVPDFPLSPPKKKDLS) form a disordered region. Lysine 29 is subject to N6-methyllysine. Serine 31 carries the phosphoserine modification. Serine 38 is subject to Phosphoserine; by CDK1, MAPK1 and MAPK3. Residues 41–140 (KKKDLSLEEI…EEVRKNKESK (100 aa)) adopt a coiled-coil conformation. A Phosphoserine; by PKA modification is found at serine 63. An N6-acetyllysine mark is found at lysine 100 and lysine 119. A compositionally biased stretch (basic and acidic residues) spans 104 to 143 (KMEANKENREAQMAAKLERLREKDKHVEEVRKNKESKDPA). Residues 104 to 149 (KMEANKENREAQMAAKLERLREKDKHVEEVRKNKESKDPADETEAD) form a disordered region.

Belongs to the stathmin family. As to quaternary structure, binds to two alpha/beta-tubulin heterodimers. Interacts with KIST. Post-translationally, many different phosphorylated forms are observed depending on specific combinations among the sites which can be phosphorylated. MAPK is responsible for the phosphorylation of stathmin in response to NGF. Phosphorylation at Ser-16 seems to be required for neuron polarization. As to expression, highly expressed in the lateral nucleus of the amygdala.

It localises to the cytoplasm. The protein localises to the cytoskeleton. In terms of biological role, involved in the regulation of the microtubule (MT) filament system by destabilizing microtubules. Prevents assembly and promotes disassembly of microtubules. Phosphorylation at Ser-16 may be required for axon formation during neurogenesis. Involved in the control of the learned and innate fear. The sequence is that of Stathmin (Stmn1) from Mus musculus (Mouse).